The chain runs to 303 residues: Serine/threonine-protein phosphatase PP-X homolog 2 (303 aa).

The Mn(2+) site is built by Asp-51, His-53, Asp-79, and Asn-111. The active-site Proton donor is the His-112. Residues His-161 and His-235 each coordinate Mn(2+).

Belongs to the PPP phosphatase family. PP-4 (PP-X) subfamily. Mn(2+) serves as cofactor.

The catalysed reaction is O-phospho-L-seryl-[protein] + H2O = L-seryl-[protein] + phosphate. It carries out the reaction O-phospho-L-threonyl-[protein] + H2O = L-threonyl-[protein] + phosphate. The polypeptide is Serine/threonine-protein phosphatase PP-X homolog 2 (Ppx2) (Paramecium tetraurelia).